The chain runs to 61 residues: Large ribosomal subunit protein bL28 (61 aa).

This sequence belongs to the bacterial ribosomal protein bL28 family.

The sequence is that of Large ribosomal subunit protein bL28 from Lachnospira eligens (strain ATCC 27750 / DSM 3376 / VPI C15-48 / C15-B4) (Eubacterium eligens).